Reading from the N-terminus, the 352-residue chain is C-C chemokine receptor type 5 (352 aa).

Topologically, residues 1 to 30 (MDYQVSSPTYDIDYYTSEPCQKINVKQIAA) are extracellular. Sulfotyrosine is present on Tyr-3. O-linked (GalNAc...) serine glycosylation is found at Ser-6 and Ser-7. A sulfotyrosine mark is found at Tyr-10, Tyr-14, and Tyr-15. Cystine bridges form between Cys-20–Cys-269 and Cys-101–Cys-178. The chain crosses the membrane as a helical span at residues 31-58 (RLLPPLYSLVFIFGFVGNILVVLILINC). Topologically, residues 59-68 (KRLKSMTDIY) are cytoplasmic. A helical membrane pass occupies residues 69 to 89 (LLNLAISDLLFLLTVPFWAHY). Over 90–102 (AAAQWNFGNTMCQ) the chain is Extracellular. A helical transmembrane segment spans residues 103–124 (LLTGLYFIGFFSGIFFIILLTI). Over 125–141 (DRYLAIVHAVFALKART) the chain is Cytoplasmic. Residues 142–166 (VTFGVVTSVITWVVAVFASLPGIIF) traverse the membrane as a helical segment. At 167 to 198 (TRYQREGLHYTCSSHFPYSQYQFWKNFQTLKI) the chain is on the extracellular side. A helical membrane pass occupies residues 199 to 218 (VILGLVLPLLVMVICYSGIL). Over 219 to 235 (KTLLRCRNEKKRHRAVR) the chain is Cytoplasmic. Residues 236–260 (LIFTIMIVYFLFWAPYNIVLLLNTF) traverse the membrane as a helical segment. Residues 261 to 277 (QEFFGLNNCSSSNRLDQ) are Extracellular-facing. Residues 278–301 (AMQVTETLGMTHCCINPIIYAFVG) traverse the membrane as a helical segment. Residues 302–352 (EKFRNYLLVFFQKHIAKRFCKCCSIFQQEAPERASSVYTRSTGEQETSVGL) are Cytoplasmic-facing. 3 S-palmitoyl cysteine lipidation sites follow: Cys-321, Cys-323, and Cys-324. 4 positions are modified to phosphoserine; by BARK1: Ser-336, Ser-337, Ser-342, and Ser-349.

This sequence belongs to the G-protein coupled receptor 1 family. As to quaternary structure, interacts with PRAF2. Efficient ligand binding to CCL3/MIP-1alpha and CCL4/MIP-1beta requires sulfation, O-glycosylation and sialic acid modifications. Glycosylation on Ser-6 is required for efficient binding of CCL4. Interacts with GRK2. Interacts with ARRB1 and ARRB2. Interacts with CNIH4. Interacts with S100A4; this interaction stimulates T-lymphocyte chemotaxis. Post-translationally, sulfated on at least 2 of the N-terminal tyrosines. Sulfation is required for efficient binding of the chemokines, CCL3 and CCL4. Palmitoylation in the C-terminal is important for cell surface expression. In terms of processing, phosphorylation on serine residues in the C-terminal is stimulated by binding CC chemokines especially by APO-RANTES. Post-translationally, O-glycosylated, but not N-glycosylated. Ser-6 appears to be the major site even if Ser-7 may be also O-glycosylated. Also sialylated glycans present which contribute to chemokine binding. Thr-16 and Ser-17 may also be glycosylated and, if so, with small moieties such as a T-antigen.

Its subcellular location is the cell membrane. Receptor for a number of inflammatory CC-chemokines including CCL3/MIP-1-alpha, CCL4/MIP-1-beta and RANTES and subsequently transduces a signal by increasing the intracellular calcium ion level. May play a role in the control of granulocytic lineage proliferation or differentiation. Participates in T-lymphocyte migration to the infection site by acting as a chemotactic receptor. The chain is C-C chemokine receptor type 5 (CCR5) from Erythrocebus patas (Red guenon).